A 264-amino-acid polypeptide reads, in one-letter code: Thymidylate synthase (264 aa).

Position 21 (Arg-21) interacts with dUMP. His-51 is a binding site for (6R)-5,10-methylene-5,6,7,8-tetrahydrofolate. 126 to 127 is a dUMP binding site; it reads RR. Cys-146 serves as the catalytic Nucleophile. DUMP-binding positions include 166–169, Asn-177, and 207–209; these read RSAD and HLY. Position 169 (Asp-169) interacts with (6R)-5,10-methylene-5,6,7,8-tetrahydrofolate. Residue Ala-263 participates in (6R)-5,10-methylene-5,6,7,8-tetrahydrofolate binding.

The protein belongs to the thymidylate synthase family. Bacterial-type ThyA subfamily. Homodimer.

Its subcellular location is the cytoplasm. It carries out the reaction dUMP + (6R)-5,10-methylene-5,6,7,8-tetrahydrofolate = 7,8-dihydrofolate + dTMP. It participates in pyrimidine metabolism; dTTP biosynthesis. In terms of biological role, catalyzes the reductive methylation of 2'-deoxyuridine-5'-monophosphate (dUMP) to 2'-deoxythymidine-5'-monophosphate (dTMP) while utilizing 5,10-methylenetetrahydrofolate (mTHF) as the methyl donor and reductant in the reaction, yielding dihydrofolate (DHF) as a by-product. This enzymatic reaction provides an intracellular de novo source of dTMP, an essential precursor for DNA biosynthesis. The protein is Thymidylate synthase of Aromatoleum aromaticum (strain DSM 19018 / LMG 30748 / EbN1) (Azoarcus sp. (strain EbN1)).